We begin with the raw amino-acid sequence, 313 residues long: MEKRKIILDCDPGHDDAIAIMMAAKHPAIDLLGITIVAGNQTLDKTLINGLNVCQKLEINVPVYAGMPQPIMRQQIVADNIHGDTGLDGPVFEPLTRQAESTHAVKYIIDTLMASDGDITLVPVGPLSNIAVAMRMQPAILPKIREIVLMGGAYGTGNFTPSAEFNIFADPEAARVVFTSGVPLVMMGLDLTNQTVCTPDVIARMERAGGPAGELFSDIMNFTLKTQFENYGLAGGPVHDATCIGYLINPDGIKTQEMYVEVDVNSGPCYGRTVCDELGVLGKPANTKVGITIDSDWFWGLVEECVRGYIKTH.

The active-site Proton acceptor is the aspartate 11. Aspartate 11, aspartate 16, and valine 124 together coordinate Ca(2+). Substrate-binding residues include glutamine 227 and histidine 239. Aspartate 240 provides a ligand contact to Ca(2+).

Belongs to the IUNH family. RihB subfamily. Homotetramer. Ca(2+) is required as a cofactor.

It carries out the reaction a pyrimidine ribonucleoside + H2O = a pyrimidine nucleobase + D-ribose. Hydrolyzes cytidine or uridine to ribose and cytosine or uracil, respectively. Has a clear preference for cytidine over uridine. Strictly specific for ribonucleosides. The sequence is that of Pyrimidine-specific ribonucleoside hydrolase RihB from Escherichia coli O157:H7.